The sequence spans 618 residues: 1-aminocyclopropane-1-carboxylate synthase-like protein 1 (618 aa).

The span at 11–26 (QGTQTPAAQTTCAPST) shows a compositional bias: low complexity. Residues 11–54 (QGTQTPAAQTTCAPSTMSSSSRPPLETLQAQSVSADETPGSALP) form a disordered region. A compositionally biased stretch (polar residues) spans 27–45 (MSSSSRPPLETLQAQSVSA). Glu122 is a substrate binding site. Residue Lys340 is modified to N6-(pyridoxal phosphate)lysine.

The protein belongs to the class-I pyridoxal-phosphate-dependent aminotransferase family.

This chain is 1-aminocyclopropane-1-carboxylate synthase-like protein 1 (accs), found in Takifugu rubripes (Japanese pufferfish).